Reading from the N-terminus, the 245-residue chain is U21-ctenitoxin-Pn1a (245 aa).

Positions 1 to 245 (IVYGTVTTPG…FRSWMDKVMT (245 aa)) constitute a Peptidase S1 domain. Cysteines 30 and 46 form a disulfide. Residues H45 and D95 each act as charge relay system in the active site. Disulfide bonds link C161–C183 and C192–C221. Residue S196 is the Charge relay system of the active site.

In terms of tissue distribution, expressed by the venom gland.

It is found in the secreted. In terms of biological role, protease. Hydrolyzes gelatin and succinyl casein. This Phoneutria nigriventer (Brazilian armed spider) protein is U21-ctenitoxin-Pn1a.